The primary structure comprises 566 residues: Arginine--tRNA ligase (566 aa).

Positions 123–133 (PNVAKPFHVGH) match the 'HIGH' region motif.

Belongs to the class-I aminoacyl-tRNA synthetase family. In terms of assembly, monomer.

It localises to the cytoplasm. It carries out the reaction tRNA(Arg) + L-arginine + ATP = L-arginyl-tRNA(Arg) + AMP + diphosphate. This chain is Arginine--tRNA ligase, found in Alkaliphilus metalliredigens (strain QYMF).